The primary structure comprises 29 residues: DLMQFETLIMKIAGRSGVWIYGSYGCYCG.

Ca(2+) contacts are provided by Tyr27 and Gly29.

The cofactor is Ca(2+). In terms of tissue distribution, expressed by the venom gland.

The protein localises to the secreted. The enzyme catalyses a 1,2-diacyl-sn-glycero-3-phosphocholine + H2O = a 1-acyl-sn-glycero-3-phosphocholine + a fatty acid + H(+). Its function is as follows. Snake venom phospholipase A2 (PLA2) that inhibits the ADP- and collagen-induced human platelet aggregation. Exhibits strong hydrolytic activities and prefers the anionic micelles (dPPC with deoxycholate) to the zwitterionic micelles (dPPC with Triton X-100). PLA2 catalyzes the calcium-dependent hydrolysis of the 2-acyl groups in 3-sn-phosphoglycerides. This chain is Acidic phospholipase A2 Omo-E6, found in Ovophis monticola (Chinese mountain pitviper).